A 496-amino-acid chain; its full sequence is Glutamyl-tRNA(Gln) amidotransferase subunit A (496 aa).

Catalysis depends on charge relay system residues Lys75 and Ser150. Ser174 functions as the Acyl-ester intermediate in the catalytic mechanism.

Belongs to the amidase family. GatA subfamily. Heterotrimer of A, B and C subunits.

It catalyses the reaction L-glutamyl-tRNA(Gln) + L-glutamine + ATP + H2O = L-glutaminyl-tRNA(Gln) + L-glutamate + ADP + phosphate + H(+). Functionally, allows the formation of correctly charged Gln-tRNA(Gln) through the transamidation of misacylated Glu-tRNA(Gln) in organisms which lack glutaminyl-tRNA synthetase. The reaction takes place in the presence of glutamine and ATP through an activated gamma-phospho-Glu-tRNA(Gln). The polypeptide is Glutamyl-tRNA(Gln) amidotransferase subunit A (Burkholderia lata (strain ATCC 17760 / DSM 23089 / LMG 22485 / NCIMB 9086 / R18194 / 383)).